The following is a 339-amino-acid chain: uncharacterized protein (339 aa).

In terms of domain architecture, ABC transporter spans 13–243 (LSLNKLDVGF…PATPFICEFI (231 aa)). ATP is bound at residue 45-52 (GPSGSGKS).

This sequence belongs to the ABC transporter superfamily.

The protein resides in the cell inner membrane. Probably part of a binding-protein-dependent transport system y4fNOP. Probably responsible for energy coupling to the transport system. This is an uncharacterized protein from Sinorhizobium fredii (strain NBRC 101917 / NGR234).